We begin with the raw amino-acid sequence, 112 residues long: DNA-directed RNA polymerase subunit Rpo11 (112 aa).

This sequence belongs to the archaeal Rpo11/eukaryotic RPB11/RPC19 RNA polymerase subunit family. As to quaternary structure, part of the RNA polymerase complex.

It localises to the cytoplasm. The enzyme catalyses RNA(n) + a ribonucleoside 5'-triphosphate = RNA(n+1) + diphosphate. Its function is as follows. DNA-dependent RNA polymerase (RNAP) catalyzes the transcription of DNA into RNA using the four ribonucleoside triphosphates as substrates. This is DNA-directed RNA polymerase subunit Rpo11 from Methanopyrus kandleri (strain AV19 / DSM 6324 / JCM 9639 / NBRC 100938).